Consider the following 579-residue polypeptide: Solute carrier family 15 member 5 (579 aa).

A run of 11 helical transmembrane segments spans residues 77-97, 110-130, 154-174, 191-211, 221-241, 304-324, 343-363, 386-406, 422-442, 472-492, and 509-529; these read CQAAILNLCFIGTSILTPVFV, LVYICLFLHFLGTALLSVVAF, LFYVALLTICLGIGGVRAIVC, SFFNWFYWLMNLNATIVFLGI, ALVLLIPFMSMLMAVITLHMI, TFFLTLLPLFIFQLLYRMCIM, GFLLPIAVMNAISSLPLLILA, CIIAGNLFAALSVMIAGFFEI, VLTVSSMPCFYLILQYVLLGV, TLFNGFGCFTGALLVKLVYLI, and SFFFFLASLTLLNVLGFCSVS.

It belongs to the major facilitator superfamily. Proton-dependent oligopeptide transporter (POT/PTR) (TC 2.A.17) family.

The protein localises to the membrane. Functionally, proton oligopeptide cotransporter. In Homo sapiens (Human), this protein is Solute carrier family 15 member 5 (SLC15A5).